We begin with the raw amino-acid sequence, 647 residues long: Glutamyl-tRNA(Gln) amidotransferase subunit B, mitochondrial (647 aa).

The tract at residues Gln87 to Thr106 is disordered. Positions Ala90–Lys100 are enriched in basic residues.

This sequence belongs to the GatB/GatE family. GatB subfamily. Subunit of the heterotrimeric GatCAB amidotransferase (AdT) complex, composed of A, B and C subunits.

It localises to the mitochondrion. The catalysed reaction is L-glutamyl-tRNA(Gln) + L-glutamine + ATP + H2O = L-glutaminyl-tRNA(Gln) + L-glutamate + ADP + phosphate + H(+). In terms of biological role, allows the formation of correctly charged Gln-tRNA(Gln) through the transamidation of misacylated Glu-tRNA(Gln) in the mitochondria. The reaction takes place in the presence of glutamine and ATP through an activated gamma-phospho-Glu-tRNA(Gln). The protein is Glutamyl-tRNA(Gln) amidotransferase subunit B, mitochondrial of Neurospora crassa (strain ATCC 24698 / 74-OR23-1A / CBS 708.71 / DSM 1257 / FGSC 987).